The primary structure comprises 208 residues: ATP-dependent Clp protease proteolytic subunit (208 aa).

Ser112 acts as the Nucleophile in catalysis. His137 is a catalytic residue.

The protein belongs to the peptidase S14 family. In terms of assembly, fourteen ClpP subunits assemble into 2 heptameric rings which stack back to back to give a disk-like structure with a central cavity, resembling the structure of eukaryotic proteasomes.

The protein localises to the cytoplasm. It catalyses the reaction Hydrolysis of proteins to small peptides in the presence of ATP and magnesium. alpha-casein is the usual test substrate. In the absence of ATP, only oligopeptides shorter than five residues are hydrolyzed (such as succinyl-Leu-Tyr-|-NHMec, and Leu-Tyr-Leu-|-Tyr-Trp, in which cleavage of the -Tyr-|-Leu- and -Tyr-|-Trp bonds also occurs).. Its function is as follows. Cleaves peptides in various proteins in a process that requires ATP hydrolysis. Has a chymotrypsin-like activity. Plays a major role in the degradation of misfolded proteins. In Buchnera aphidicola subsp. Acyrthosiphon pisum (strain APS) (Acyrthosiphon pisum symbiotic bacterium), this protein is ATP-dependent Clp protease proteolytic subunit.